The sequence spans 364 residues: tRNA-specific 2-thiouridylase MnmA 1 (364 aa).

ATP is bound by residues 10 to 17 (GMSGGVDS) and Met-36. Cys-106 (nucleophile) is an active-site residue. Cys-106 and Cys-204 form a disulfide bridge. Residue Gly-130 coordinates ATP. Residues 154-156 (KDQ) form an interaction with tRNA region. Cys-204 serves as the catalytic Cysteine persulfide intermediate. An interaction with tRNA region spans residues 310 to 311 (RY).

It belongs to the MnmA/TRMU family.

The protein localises to the cytoplasm. It catalyses the reaction S-sulfanyl-L-cysteinyl-[protein] + uridine(34) in tRNA + AH2 + ATP = 2-thiouridine(34) in tRNA + L-cysteinyl-[protein] + A + AMP + diphosphate + H(+). Functionally, catalyzes the 2-thiolation of uridine at the wobble position (U34) of tRNA, leading to the formation of s(2)U34. This chain is tRNA-specific 2-thiouridylase MnmA 1, found in Caldanaerobacter subterraneus subsp. tengcongensis (strain DSM 15242 / JCM 11007 / NBRC 100824 / MB4) (Thermoanaerobacter tengcongensis).